A 249-amino-acid polypeptide reads, in one-letter code: Eukaryotic translation initiation factor 6 (249 aa).

Belongs to the eIF-6 family. As to quaternary structure, monomer. Associates with the 60S ribosomal subunit.

The protein localises to the cytoplasm. The protein resides in the nucleus. Its subcellular location is the nucleolus. Its function is as follows. Binds to the 60S ribosomal subunit and prevents its association with the 40S ribosomal subunit to form the 80S initiation complex in the cytoplasm. May also be involved in ribosome biogenesis. The protein is Eukaryotic translation initiation factor 6 of Babesia bovis.